Reading from the N-terminus, the 590-residue chain is Aspartate--tRNA(Asp/Asn) ligase (590 aa).

E170 serves as a coordination point for L-aspartate. Positions 194–197 are aspartate; sequence QLFK. R216 is a binding site for L-aspartate. ATP is bound by residues 216–218 and Q225; that span reads RDE. H448 lines the L-aspartate pocket. An ATP-binding site is contributed by E482. R489 is a binding site for L-aspartate. 534–537 contacts ATP; the sequence is GWDR. Positions 557–590 are disordered; it reads SGGGADPLTGAPAPITPQQRRESGIDAKPKKDGE. A compositionally biased stretch (basic and acidic residues) spans 575-590; it reads QRRESGIDAKPKKDGE.

Belongs to the class-II aminoacyl-tRNA synthetase family. Type 1 subfamily. In terms of assembly, homodimer.

Its subcellular location is the cytoplasm. It carries out the reaction tRNA(Asx) + L-aspartate + ATP = L-aspartyl-tRNA(Asx) + AMP + diphosphate. Aspartyl-tRNA synthetase with relaxed tRNA specificity since it is able to aspartylate not only its cognate tRNA(Asp) but also tRNA(Asn). Reaction proceeds in two steps: L-aspartate is first activated by ATP to form Asp-AMP and then transferred to the acceptor end of tRNA(Asp/Asn). In Mycobacterium sp. (strain JLS), this protein is Aspartate--tRNA(Asp/Asn) ligase.